We begin with the raw amino-acid sequence, 262 residues long: ATP synthase subunit a (262 aa).

6 helical membrane passes run 50 to 70, 107 to 127, 141 to 161, 194 to 214, 218 to 238, and 239 to 259; these read TMIM…ACTK, MMPI…LGLI, FGLA…ANGV, LYGN…LINI, VFGG…VGFV, and QAFV…AHEA.

This sequence belongs to the ATPase A chain family. As to quaternary structure, F-type ATPases have 2 components, CF(1) - the catalytic core - and CF(0) - the membrane proton channel. CF(1) has five subunits: alpha(3), beta(3), gamma(1), delta(1), epsilon(1). CF(0) has three main subunits: a(1), b(2) and c(9-12). The alpha and beta chains form an alternating ring which encloses part of the gamma chain. CF(1) is attached to CF(0) by a central stalk formed by the gamma and epsilon chains, while a peripheral stalk is formed by the delta and b chains.

Its subcellular location is the cell membrane. Its function is as follows. Key component of the proton channel; it plays a direct role in the translocation of protons across the membrane. In Desulforamulus reducens (strain ATCC BAA-1160 / DSM 100696 / MI-1) (Desulfotomaculum reducens), this protein is ATP synthase subunit a.